The following is an 866-amino-acid chain: E3 ubiquitin-protein ligase RNF216 (866 aa).

Disordered regions lie at residues 46–117, 131–161, and 211–240; these read LVTP…NPRS, YTES…SAAL, and EFPG…HPLG. A compositionally biased stretch (acidic residues) spans 55–76; the sequence is EEEDLDDDVILTEDDSEDDYGE. Glycyl lysine isopeptide (Lys-Gly) (interchain with G-Cter in SUMO2) cross-links involve residues Leu80, Thr89, and Lys100. The segment covering 137–156 has biased composition (polar residues); sequence LETQNQSSEDSETELLSNLG. Residues Lys351 and Lys354 each participate in a glycyl lysine isopeptide (Lys-Gly) (interchain with G-Cter in SUMO2) cross-link. Ser419 carries the phosphoserine modification. Residues Lys425, Lys430, Lys448, Lys459, and Lys485 each participate in a glycyl lysine isopeptide (Lys-Gly) (interchain with G-Cter in SUMO2) cross-link. Residues 475-491 adopt a coiled-coil conformation; it reads VQQEQEFYEQKIKEMAE. The TRIAD supradomain stretch occupies residues 511–728; that stretch reads QLIECRCCYG…SPGAPCQECS (218 aa). 6 residues coordinate Zn(2+): Cys515, Cys518, Cys537, Cys540, Cys605, and Cys608. The RING-type 1 zinc finger occupies 515–564; the sequence is CRCCYGEFPFEELTQCADAHLFCKECLIRYAQEAVFGSGKLELSCMEGSC. The IBR-type zinc-finger motif lies at 583 to 648; it reads YKYYERKAEE…LWKEHNGLTC (66 aa). A Glycyl lysine isopeptide (Lys-Gly) (interchain with G-Cter in SUMO2) cross-link involves residue Lys619. Zn(2+)-binding residues include Cys623, Cys628, Cys633, Cys636, His643, and Cys648. Glycyl lysine isopeptide (Lys-Gly) (interchain with G-Cter in SUMO2) cross-links involve residues Lys658 and Lys666. Residues Cys675 and Cys678 each coordinate Zn(2+). The RING-type 2; atypical zinc finger occupies 675–703; the sequence is CHKCGTGLIKSEGCNRMSCRCGAQMCYLC. The active site involves Cys688. Zn(2+) contacts are provided by Cys693, Cys695, Cys700, Cys703, and His716. At Ser719 the chain carries Phosphoserine; by MAPK1. Cys724 is a binding site for Zn(2+). Positions 737-763 form a coiled coil; that stretch reads TEDDEKLIEEIQKEAEEEQKRKNGENT. Residues Lys765 and Lys773 each participate in a glycyl lysine isopeptide (Lys-Gly) (interchain with G-Cter in SUMO2) cross-link.

Interacts with UBE2L3 and to some extent with UBE2L6. Interacts with TRAF3, TLR3, TLR4, TLR5 and TLR9. Isoform 3/ZIN binds RIPK1. As to quaternary structure, (Microbial infection) Isoform 3/ZIN binds RIPK1 and HIV Vif. Auto-ubiquitinated. Post-translationally, phosphorylation at Ser-719 enhances acceptor ubiquitin binding and chain-type specificity towards 'Lys-63' di-ubiquitin but not di-ubiquitin with other linkage types. In terms of tissue distribution, ubiquitous, with the highest levels of expression in testis and peripheral blood leukocytes.

It is found in the cytoplasm. The protein localises to the cytoplasmic vesicle. The protein resides in the clathrin-coated vesicle. It carries out the reaction S-ubiquitinyl-[E2 ubiquitin-conjugating enzyme]-L-cysteine + [acceptor protein]-L-lysine = [E2 ubiquitin-conjugating enzyme]-L-cysteine + N(6)-ubiquitinyl-[acceptor protein]-L-lysine.. It functions in the pathway protein modification; protein ubiquitination. Its activity is regulated as follows. Allosterically activated by 'Lys-63'-linked di-ubiquitin. Its function is as follows. E3 ubiquitin ligase which accepts ubiquitin from specific E2 ubiquitin-conjugating enzymes, and then transfers it to substrates promoting their ubiquitination. Plays a role in the regulation of antiviral responses by promoting the degradation of TRAF3, TLR4 and TLR9. In turn, down-regulates NF-kappa-B and IRF3 activation as well as beta interferon production. Also participates in the regulation of autophagy by ubiquitinating BECN1 leading to its degradation and autophagy inhibition. Plays a role in ARC-dependent synaptic plasticity by mediating ARC ubiquitination resulting in its rapid proteasomal degradation. Plays aso an essential role in spermatogenesis and male fertility. Mechanistically, regulates meiosis by promoting the degradation of PRKACB through the ubiquitin-mediated lysosome pathway. Modulates the gonadotropin-releasing hormone signal pathway by affecting the stability of STAU2 that is required for the microtubule-dependent transport of neuronal RNA from the cell body to the dendrite. In terms of biological role, inhibits TNF and IL-1 mediated activation of NF-kappa-B. Promotes TNF and RIP mediated apoptosis. This Homo sapiens (Human) protein is E3 ubiquitin-protein ligase RNF216 (RNF216).